A 444-amino-acid chain; its full sequence is Homogentisate 1,2-dioxygenase (444 aa).

The Proton acceptor role is filled by H298. The Fe cation site is built by H341 and E347. Homogentisate-binding residues include Y356 and H377. H377 provides a ligand contact to Fe cation.

This sequence belongs to the homogentisate dioxygenase family. In terms of assembly, hexamer; dimer of trimers. Requires Fe cation as cofactor.

The catalysed reaction is homogentisate + O2 = 4-maleylacetoacetate + H(+). It participates in amino-acid degradation; L-phenylalanine degradation; acetoacetate and fumarate from L-phenylalanine: step 4/6. Its function is as follows. Involved in the catabolism of homogentisate (2,5-dihydroxyphenylacetate or 2,5-OH-PhAc), a central intermediate in the degradation of phenylalanine and tyrosine. Catalyzes the oxidative ring cleavage of the aromatic ring of homogentisate to yield maleylacetoacetate. The protein is Homogentisate 1,2-dioxygenase of Burkholderia ambifaria (strain MC40-6).